The chain runs to 228 residues: uncharacterized protein (228 aa).

The N-terminal stretch at 1–23 (MIRHTRLLLASLCLIATGARASA) is a signal peptide.

This is an uncharacterized protein from Methylorubrum extorquens (strain ATCC 14718 / DSM 1338 / JCM 2805 / NCIMB 9133 / AM1) (Methylobacterium extorquens).